We begin with the raw amino-acid sequence, 105 residues long: MDIKKGDLVLVISGKDKGKRGKVISVLPSEEKVIVEGVNIVKKHTRPNAKMRQGGIIEKPAPLYRCKVMLICPHCNQPTRIKHTFLEDGRKVRVCSKCKEIIDRV.

This sequence belongs to the universal ribosomal protein uL24 family. Part of the 50S ribosomal subunit.

In terms of biological role, one of two assembly initiator proteins, it binds directly to the 5'-end of the 23S rRNA, where it nucleates assembly of the 50S subunit. One of the proteins that surrounds the polypeptide exit tunnel on the outside of the subunit. The sequence is that of Large ribosomal subunit protein uL24 from Dictyoglomus thermophilum (strain ATCC 35947 / DSM 3960 / H-6-12).